A 261-amino-acid polypeptide reads, in one-letter code: tRNA pseudouridine synthase A (261 aa).

Aspartate 53 functions as the Nucleophile in the catalytic mechanism. A substrate-binding site is contributed by tyrosine 111.

It belongs to the tRNA pseudouridine synthase TruA family. In terms of assembly, homodimer.

It catalyses the reaction uridine(38/39/40) in tRNA = pseudouridine(38/39/40) in tRNA. In terms of biological role, formation of pseudouridine at positions 38, 39 and 40 in the anticodon stem and loop of transfer RNAs. This Shouchella clausii (strain KSM-K16) (Alkalihalobacillus clausii) protein is tRNA pseudouridine synthase A.